The following is a 480-amino-acid chain: Molybdate-anion transporter (480 aa).

The next 12 membrane-spanning stretches (helical) occupy residues 1-21, 44-63, 78-98, 129-149, 177-197, 199-219, 274-294, 304-324, 339-359, 369-389, 401-421, and 441-461; these read MFVT…GLEL, ATFL…QGPY, IAIL…FSGW, FVLI…TTTF, TWNH…AEWL, LGPV…AWFV, VMLL…FIFL, SPLG…SLLF, VLCV…FSTV, FLAF…LNFL, SVLA…LLAL, and FGGC…LFTL.

The protein belongs to the major facilitator superfamily.

The protein resides in the cell membrane. Its function is as follows. Mediates high-affinity intracellular uptake of the rare oligo-element molybdenum. In Takifugu rubripes (Japanese pufferfish), this protein is Molybdate-anion transporter (mfsd5).